The following is a 239-amino-acid chain: Ribosomal RNA small subunit methyltransferase G (239 aa).

Residues Gly75, Leu80, 126–127, and Arg142 each bind S-adenosyl-L-methionine; that span reads AE.

The protein belongs to the methyltransferase superfamily. RNA methyltransferase RsmG family.

Its subcellular location is the cytoplasm. Specifically methylates the N7 position of guanine in position 518 of 16S rRNA. The protein is Ribosomal RNA small subunit methyltransferase G of Streptomyces coelicolor (strain ATCC BAA-471 / A3(2) / M145).